The sequence spans 318 residues: Methionyl-tRNA formyltransferase (318 aa).

A (6S)-5,6,7,8-tetrahydrofolate-binding site is contributed by 112-115 (SILP).

The protein belongs to the Fmt family.

It carries out the reaction L-methionyl-tRNA(fMet) + (6R)-10-formyltetrahydrofolate = N-formyl-L-methionyl-tRNA(fMet) + (6S)-5,6,7,8-tetrahydrofolate + H(+). In terms of biological role, attaches a formyl group to the free amino group of methionyl-tRNA(fMet). The formyl group appears to play a dual role in the initiator identity of N-formylmethionyl-tRNA by promoting its recognition by IF2 and preventing the misappropriation of this tRNA by the elongation apparatus. This is Methionyl-tRNA formyltransferase from Haemophilus influenzae (strain PittGG).